The primary structure comprises 153 residues: Urease accessory protein UreE (153 aa).

Belongs to the UreE family.

It is found in the cytoplasm. Functionally, involved in urease metallocenter assembly. Binds nickel. Probably functions as a nickel donor during metallocenter assembly. This chain is Urease accessory protein UreE, found in Acetivibrio thermocellus (strain ATCC 27405 / DSM 1237 / JCM 9322 / NBRC 103400 / NCIMB 10682 / NRRL B-4536 / VPI 7372) (Clostridium thermocellum).